The following is a 240-amino-acid chain: Phosphoribosylaminoimidazole-succinocarboxamide synthase (240 aa).

The protein belongs to the SAICAR synthetase family.

It catalyses the reaction 5-amino-1-(5-phospho-D-ribosyl)imidazole-4-carboxylate + L-aspartate + ATP = (2S)-2-[5-amino-1-(5-phospho-beta-D-ribosyl)imidazole-4-carboxamido]succinate + ADP + phosphate + 2 H(+). The protein operates within purine metabolism; IMP biosynthesis via de novo pathway; 5-amino-1-(5-phospho-D-ribosyl)imidazole-4-carboxamide from 5-amino-1-(5-phospho-D-ribosyl)imidazole-4-carboxylate: step 1/2. This is Phosphoribosylaminoimidazole-succinocarboxamide synthase from Acidithiobacillus ferrooxidans (strain ATCC 23270 / DSM 14882 / CIP 104768 / NCIMB 8455) (Ferrobacillus ferrooxidans (strain ATCC 23270)).